The following is a 128-amino-acid chain: Large ribosomal subunit protein uL22 (128 aa).

A disordered region spans residues 1–20 (MANGHRSQIKRERNAVKDTR). The span at 9-20 (IKRERNAVKDTR) shows a compositional bias: basic and acidic residues.

It belongs to the universal ribosomal protein uL22 family. Part of the 50S ribosomal subunit.

Functionally, this protein binds specifically to 23S rRNA; its binding is stimulated by other ribosomal proteins, e.g. L4, L17, and L20. It is important during the early stages of 50S assembly. It makes multiple contacts with different domains of the 23S rRNA in the assembled 50S subunit and ribosome. In terms of biological role, the globular domain of the protein is located near the polypeptide exit tunnel on the outside of the subunit, while an extended beta-hairpin is found that lines the wall of the exit tunnel in the center of the 70S ribosome. The polypeptide is Large ribosomal subunit protein uL22 (Lachnospira eligens (strain ATCC 27750 / DSM 3376 / VPI C15-48 / C15-B4) (Eubacterium eligens)).